The chain runs to 199 residues: TATA-box-binding protein (199 aa).

2 tandem repeats follow at residues 10 to 86 (IENI…VKLL) and 101 to 177 (IQNI…YNQL).

It belongs to the TBP family.

Its function is as follows. General factor that plays a role in the activation of archaeal genes transcribed by RNA polymerase. Binds specifically to the TATA box promoter element which lies close to the position of transcription initiation. The chain is TATA-box-binding protein from Pyrobaculum calidifontis (strain DSM 21063 / JCM 11548 / VA1).